A 344-amino-acid polypeptide reads, in one-letter code: Lipase chaperone (344 aa).

A helical transmembrane segment spans residues 14–34; that stretch reads AVVYGAVGLAAIAGVAMWSGA. The segment at 37–78 is disordered; it reads HGGTGASGEPPDASAARGPAAAPPQAAVPASTSLPPSLAGSS. Residues 43 to 78 show a composition bias toward low complexity; it reads SGEPPDASAARGPAAAPPQAAVPASTSLPPSLAGSS.

It belongs to the lipase chaperone family.

The protein localises to the cell inner membrane. Functionally, may be involved in the folding of the extracellular lipase during its passage through the periplasm. In Burkholderia cepacia (Pseudomonas cepacia), this protein is Lipase chaperone (lifO).